A 328-amino-acid polypeptide reads, in one-letter code: MSKKPVRVAVTGAAGQIGYAILFRIASGEMLGKDQPVILQLLEVPVEKAQQALQGVMMELQDCAFPLLAGMEAHSDPMTAFKDVDYALLIGSRPRGPGMERAELLAVNGAIFTAQGKALNAVASRNVKVLVVGNPANTNAYIAMKSAPDLPAKNFTAMLRLDHNRALSQLASKTGKAVADIEKMAVWGNHSPTMYADYRFATINGESVKDMINDQDWNANTFLPTVGKRGAAIIAARGVSSAASAANAAIDHMRDWALGTNGKWVTMGIPSDGQYGIPKETMFGFPVTCEGGEYKVVQNLPIDAFSQECINKTLKELQDEQAGVAHLL.

Residue 12–18 (GAAGQIG) coordinates NAD(+). Substrate contacts are provided by Arg95 and Arg101. Residues Asn108, Gln115, and 132–134 (VGN) each bind NAD(+). Residues Asn134 and Arg165 each contribute to the substrate site. The active-site Proton acceptor is the His190.

Belongs to the LDH/MDH superfamily. MDH type 2 family.

The enzyme catalyses (S)-malate + NAD(+) = oxaloacetate + NADH + H(+). Catalyzes the reversible oxidation of malate to oxaloacetate. The polypeptide is Malate dehydrogenase 1 (Albidiferax ferrireducens (strain ATCC BAA-621 / DSM 15236 / T118) (Rhodoferax ferrireducens)).